Reading from the N-terminus, the 429-residue chain is Histidine--tRNA ligase (429 aa).

It belongs to the class-II aminoacyl-tRNA synthetase family. In terms of assembly, homodimer.

Its subcellular location is the cytoplasm. It catalyses the reaction tRNA(His) + L-histidine + ATP = L-histidyl-tRNA(His) + AMP + diphosphate + H(+). In Streptococcus pneumoniae (strain P1031), this protein is Histidine--tRNA ligase.